Consider the following 827-residue polypeptide: Thymine dioxygenase JBP1 (827 aa).

The thymine dioxygenase stretch occupies residues 62-264 (QIIGVVLREA…RLTCVFYYRA (203 aa)). Residues His189, Asp191, and His239 each coordinate Fe cation. Arg255 contributes to the 2-oxoglutarate binding site. Disordered stretches follow at residues 364–383 (PLRGEDEKVKANGDSTPRPL) and 539–568 (PEEKKRRMERKQRIEEARRHGMPSGSHEKR). The interval 392 to 561 (TNLMVSTAVE…IEEARRHGMP (170 aa)) is DNA-binding JBP1 domain. Over residues 539–557 (PEEKKRRMERKQRIEEARR) the composition is skewed to basic and acidic residues.

This sequence belongs to the TET family. JBP1 subfamily. Monomer. Binds to DNA as a monomer. The cofactor is Fe(2+).

Its subcellular location is the nucleus. The enzyme catalyses thymine + 2-oxoglutarate + O2 = 5-hydroxymethyluracil + succinate + CO2. Its function is as follows. Dioxygenase that catalyzes the first step of DNA base J (beta-d-glucosyl-HOMedU) biosynthesis by converting thymine to 5-hydroxymethyluracil (HOMedU). DNA base J is a hypermodified thymidine residue found in the genome of kinetoplastid parasites, which is localized primarily to repetitive DNA, namely the telomeres, and is implicated in the regulation of antigenic variation. Also specifically binds to base J-containing DNA (J-DNA). Involved in propagation and maintenance of DNA base J synthesis initiated by JBP2 by specifically binding already synthesized DNA base J and propagating J synthesis. Thymine dioxygenase activity and J-DNA-binding are independent functions. The sequence is that of Thymine dioxygenase JBP1 (JBP1) from Leishmania tarentolae (Sauroleishmania tarentolae).